The sequence spans 286 residues: Bifunctional protein FolD (286 aa).

Residues 164–166, I189, and I230 contribute to the NADP(+) site; that span reads GAS.

This sequence belongs to the tetrahydrofolate dehydrogenase/cyclohydrolase family. Homodimer.

The enzyme catalyses (6R)-5,10-methylene-5,6,7,8-tetrahydrofolate + NADP(+) = (6R)-5,10-methenyltetrahydrofolate + NADPH. It catalyses the reaction (6R)-5,10-methenyltetrahydrofolate + H2O = (6R)-10-formyltetrahydrofolate + H(+). The protein operates within one-carbon metabolism; tetrahydrofolate interconversion. Catalyzes the oxidation of 5,10-methylenetetrahydrofolate to 5,10-methenyltetrahydrofolate and then the hydrolysis of 5,10-methenyltetrahydrofolate to 10-formyltetrahydrofolate. The protein is Bifunctional protein FolD of Wolinella succinogenes (strain ATCC 29543 / DSM 1740 / CCUG 13145 / JCM 31913 / LMG 7466 / NCTC 11488 / FDC 602W) (Vibrio succinogenes).